The following is a 238-amino-acid chain: Ribonuclease HII (238 aa).

The region spanning 23–215 is the RNase H type-2 domain; sequence QRLCGVDEAG…VREALARLPM (193 aa). Residues Asp-29, Glu-30, and Asp-124 each coordinate a divalent metal cation.

Belongs to the RNase HII family. Mn(2+) is required as a cofactor. Requires Mg(2+) as cofactor.

It localises to the cytoplasm. The catalysed reaction is Endonucleolytic cleavage to 5'-phosphomonoester.. Functionally, endonuclease that specifically degrades the RNA of RNA-DNA hybrids. The sequence is that of Ribonuclease HII from Cupriavidus necator (strain ATCC 17699 / DSM 428 / KCTC 22496 / NCIMB 10442 / H16 / Stanier 337) (Ralstonia eutropha).